The primary structure comprises 635 residues: Cationic amino acid transporter 2, vacuolar (635 aa).

The Cytoplasmic segment spans residues 1-48 (MGFLVDTQKEGGGHSWGYVRSLVRRKQVDSANGQSHGHQLARALTVPH). Residues 49–69 (LVAIGVGATIGAGVYILVGTV) traverse the membrane as a helical segment. Residues 70-76 (AREHSGP) lie on the Vacuolar side of the membrane. A helical transmembrane segment spans residues 77-97 (SLALSFLIAGIAAGLSAFCYA). The Cytoplasmic portion of the chain corresponds to 98–108 (ELSSRCPSAGS). The chain crosses the membrane as a helical span at residues 109–131 (AYHYSYICVGEGVAWIIGWALIL). Residues 132–171 (EYTIGGSAVARGISPNLALIFGGEDGLPAILARHQIPGLD) are Vacuolar-facing. The chain crosses the membrane as a helical span at residues 172-192 (IVVDPCAAILVFVVTGLLCMG). Residues 193-200 (IKESTFAQ) are Cytoplasmic-facing. The helical transmembrane segment at 201 to 221 (GIVTAVNVCVLLFVIVAGSYL) threads the bilayer. The Vacuolar portion of the chain corresponds to 222–235 (GFKTGWPGYELPTG). Residues 236–256 (FFPFGVDGMFAGSATVFFAFI) form a helical membrane-spanning segment. Residues 257–280 (GFDSVASTAEEVRNPQRDLPIGIG) lie on the Cytoplasmic side of the membrane. The chain crosses the membrane as a helical span at residues 281–301 (LALLLCCSLYMMVSIVIVGLI). The Vacuolar portion of the chain corresponds to 302–324 (PYYAMDPDTPISSAFASHDMQWA). Residues 325-345 (VYLITLGAVMALCSALMGALL) traverse the membrane as a helical segment. Residues 346–376 (PQPRILMAMARDGLLPSIFSDINKRTQVPVK) are Cytoplasmic-facing. Residues 377 to 397 (ATVATGLCAATLAFFMDVSQL) traverse the membrane as a helical segment. Residue alanine 398 is a topological domain, vacuolar. A helical transmembrane segment spans residues 399–419 (GMVSVGTLLAFTMVAISVLIL). Over 420 to 493 (RYVPPDEQPL…CLVLSEETRR (74 aa)) the chain is Cytoplasmic. A helical transmembrane segment spans residues 494–514 (IVAGWSIMFTCVGAFLLSYAA). Over 515–524 (SSLSFPGLIR) the chain is Vacuolar. A helical membrane pass occupies residues 525-545 (YPLCGVGGCLLLAGLIALSSI). Residues 546–560 (DQDDARHTFGHSGGY) lie on the Cytoplasmic side of the membrane. A helical transmembrane segment spans residues 561-581 (MCPFVPLLPIICILINMYLLV). Residues 582–585 (NLGS) lie on the Vacuolar side of the membrane. Residues 586–606 (ATWARVSVWLLIGVIVYVFYG) form a helical membrane-spanning segment. Residues 607–635 (RKNSSLANAVYVTTAHAEEIYREHEGSLA) are Cytoplasmic-facing.

This sequence belongs to the amino acid-polyamine-organocation (APC) superfamily. Cationic amino acid transporter (CAT) (TC 2.A.3.3) family. As to expression, expressed in roots, stems, flowers, leaves, and siliques.

Its subcellular location is the vacuole membrane. In terms of biological role, permease involved in the transport of the cationic amino acids. This Arabidopsis thaliana (Mouse-ear cress) protein is Cationic amino acid transporter 2, vacuolar (CAT2).